Consider the following 352-residue polypeptide: Glycerol-1-phosphate dehydrogenase [NAD(P)+] (352 aa).

NAD(+) is bound by residues 99-103 (GKSID) and 121-124 (TVAS). D126 contributes to the substrate binding site. Residue S130 coordinates NAD(+). Position 173 (D173) interacts with substrate. 2 residues coordinate Zn(2+): D173 and H253. Residue H257 coordinates substrate. Residue H269 coordinates Zn(2+).

It belongs to the glycerol-1-phosphate dehydrogenase family. In terms of assembly, homodimer. The cofactor is Zn(2+).

The protein localises to the cytoplasm. The enzyme catalyses sn-glycerol 1-phosphate + NAD(+) = dihydroxyacetone phosphate + NADH + H(+). It carries out the reaction sn-glycerol 1-phosphate + NADP(+) = dihydroxyacetone phosphate + NADPH + H(+). It functions in the pathway membrane lipid metabolism; glycerophospholipid metabolism. Totally inhibited by EDTA in vitro. Its function is as follows. Catalyzes the NAD(P)H-dependent reduction of dihydroxyacetonephosphate (DHAP or glycerone phosphate) to glycerol 1-phosphate (G1P). The G1P thus generated is used as the glycerophosphate backbone of phospholipids in the cellular membranes of Archaea. Is also able to catalyze the reverse reaction, i.e. the NAD(+)-dependent oxidation of G1P but not of G3P. Is not active toward glycerol, dihydroxyacetone, glyceraldehyde phosphate, and glycerol-2-phosphate. The protein is Glycerol-1-phosphate dehydrogenase [NAD(P)+] (egsA) of Aeropyrum pernix (strain ATCC 700893 / DSM 11879 / JCM 9820 / NBRC 100138 / K1).